A 246-amino-acid polypeptide reads, in one-letter code: 23S rRNA (guanosine-2'-O-)-methyltransferase RlmB (246 aa).

Residues Gly198, Ile218, and Leu227 each coordinate S-adenosyl-L-methionine.

The protein belongs to the class IV-like SAM-binding methyltransferase superfamily. RNA methyltransferase TrmH family. RlmB subfamily.

Its subcellular location is the cytoplasm. The enzyme catalyses guanosine(2251) in 23S rRNA + S-adenosyl-L-methionine = 2'-O-methylguanosine(2251) in 23S rRNA + S-adenosyl-L-homocysteine + H(+). Functionally, specifically methylates the ribose of guanosine 2251 in 23S rRNA. This Shewanella oneidensis (strain ATCC 700550 / JCM 31522 / CIP 106686 / LMG 19005 / NCIMB 14063 / MR-1) protein is 23S rRNA (guanosine-2'-O-)-methyltransferase RlmB.